The sequence spans 366 residues: MVRCGCALLRKYGNFIDNLRIFTKGGSGGMGYPRLGGEGGRGGDVWVVAHKNMTLKQLKNKYPQKRFVAGGGANSRVSALQGSKGKDCEVPAPVGISVTDENGQVLGELNKEEDRVLVAKGGLGGKLHTNFLPLKGQKRIVHLDLKVIADVGLVGFPNAGKSSLLSRVSHATPVIADYAFTTLRPELGKIMYNDFKQISVADLPGLIEGAHMNKGMGHKFLKHLERTRQLLFVVDISGFQLSSVTPYRTAFETIILLTKELELYKEELQTKPALLAINKMDLPDAQVKLQELMKQLLSPEDFLHLFETKMIPEKALEFQHIVPISTVTGEGIAELKSCIRKALDEQDGKESDAHRSKQLLNLQSSS.

The Obg domain occupies 13-148 (GNFIDNLRIF…RIVHLDLKVI (136 aa)). Positions 149-344 (ADVGLVGFPN…LKSCIRKALD (196 aa)) constitute an OBG-type G domain. GTP is bound by residues 155–162 (GFPNAGKS), 202–206 (DLPGL), and 278–281 (NKMD). Basic and acidic residues predominate over residues 346–355 (QDGKESDAHR). The interval 346 to 366 (QDGKESDAHRSKQLLNLQSSS) is disordered.

It belongs to the TRAFAC class OBG-HflX-like GTPase superfamily. OBG GTPase family.

The protein resides in the nucleus. It is found in the nucleolus. Its function is as follows. May be involved in the ribosome maturation process. The polypeptide is GTP-binding protein 10 (Gtpbp10) (Mus musculus (Mouse)).